We begin with the raw amino-acid sequence, 729 residues long: Glycine--tRNA ligase (729 aa).

The N-terminal 33 residues, 1-33 (MPCLLPSLLRATRAALPLLSPPRVVAASASQRL), are a transit peptide targeting the mitochondrion. The WHEP-TRS domain maps to 53–109 (LLAPLRLAVRQQGDFVRKLKEDKAPQVDVDRAVAELKARKRVLEAKELALQPKDDIV). At K194 the chain carries N6-acetyllysine. E289 contacts glycine. ATP contacts are provided by residues 321 to 323 (RNE) and 332 to 333 (RV). Glycine is bound at residue E340. A Phosphotyrosine modification is found at Y443. Position 447–448 (447–448 (EI)) interacts with ATP. Position 491 is an N6-acetyllysine (K491). 566 to 568 (EPS) provides a ligand contact to glycine. R573 provides a ligand contact to ATP. S690 is modified (phosphoserine). T726 bears the Phosphothreonine mark.

This sequence belongs to the class-II aminoacyl-tRNA synthetase family. In terms of assembly, homodimer.

The protein resides in the cytoplasm. The protein localises to the mitochondrion. It is found in the cell projection. It localises to the axon. Its subcellular location is the secreted. The protein resides in the extracellular exosome. The catalysed reaction is tRNA(Gly) + glycine + ATP = glycyl-tRNA(Gly) + AMP + diphosphate. The enzyme catalyses 2 ATP + H(+) = P(1),P(4)-bis(5'-adenosyl) tetraphosphate + diphosphate. Catalyzes the ATP-dependent ligation of glycine to the 3'-end of its cognate tRNA, via the formation of an aminoacyl-adenylate intermediate (Gly-AMP). Also produces diadenosine tetraphosphate (Ap4A), a universal pleiotropic signaling molecule needed for cell regulation pathways, by direct condensation of 2 ATPs. Thereby, may play a special role in Ap4A homeostasis. This chain is Glycine--tRNA ligase (Gars1), found in Mus musculus (Mouse).